A 449-amino-acid polypeptide reads, in one-letter code: tRNA-2-methylthio-N(6)-dimethylallyladenosine synthase (449 aa).

The 118-residue stretch at 7–124 folds into the MTTase N-terminal domain; it reads DAFYIHTFGC…LPLLIKQVQQ (118 aa). Residues Cys16, Cys52, Cys87, Cys163, Cys167, and Cys170 each coordinate [4Fe-4S] cluster. The Radical SAM core domain maps to 149 to 379; it reads RSSSMSAFVP…IECQNRISAS (231 aa). Positions 382–445 constitute a TRAM domain; it reads SQAVGSVVEV…SATLLGEPLI (64 aa).

The protein belongs to the methylthiotransferase family. MiaB subfamily. As to quaternary structure, monomer. [4Fe-4S] cluster is required as a cofactor.

It localises to the cytoplasm. The catalysed reaction is N(6)-dimethylallyladenosine(37) in tRNA + (sulfur carrier)-SH + AH2 + 2 S-adenosyl-L-methionine = 2-methylsulfanyl-N(6)-dimethylallyladenosine(37) in tRNA + (sulfur carrier)-H + 5'-deoxyadenosine + L-methionine + A + S-adenosyl-L-homocysteine + 2 H(+). Its function is as follows. Catalyzes the methylthiolation of N6-(dimethylallyl)adenosine (i(6)A), leading to the formation of 2-methylthio-N6-(dimethylallyl)adenosine (ms(2)i(6)A) at position 37 in tRNAs that read codons beginning with uridine. The sequence is that of tRNA-2-methylthio-N(6)-dimethylallyladenosine synthase from Chlorobium chlorochromatii (strain CaD3).